The chain runs to 251 residues: Probable phosphatase Sputcn32_1369 (251 aa).

Positions 8, 10, 16, 41, 74, 102, 132, 193, and 195 each coordinate Zn(2+).

The protein belongs to the PHP family. The cofactor is Zn(2+).

This chain is Probable phosphatase Sputcn32_1369, found in Shewanella putrefaciens (strain CN-32 / ATCC BAA-453).